The following is a 122-amino-acid chain: UPF0102 protein VIBHAR_00890 (122 aa).

It belongs to the UPF0102 family.

In Vibrio campbellii (strain ATCC BAA-1116), this protein is UPF0102 protein VIBHAR_00890.